Here is a 2541-residue protein sequence, read N- to C-terminus: Talin-1 (2541 aa).

Positions 86–403 (RPLKIRMLDG…GYIDIILKKK (318 aa)) constitute an FERM domain. A Phosphothreonine modification is found at Thr-167. Residues 280 to 435 (FQAHKNCGQM…PKKSTVLQQQ (156 aa)) form an interaction with LAYN region. Residues Ser-405, Ser-425, Ser-446, Ser-620, and Ser-729 each carry the phosphoserine modification. The tract at residues 482-655 (RGHMPPLTSA…QASGELLQQI (174 aa)) is helical bundle R1. The helical bundle R2 stretch occupies residues 656-786 (GESDTDPHFQ…ALNELLQHVK (131 aa)). Residues 787–911 (AHATGAGPAG…NAAAQNAIKK (125 aa)) form a helical bundle R3 region. Positions 913–1044 (LVQRLEHAAK…RTAAQKAQEA (132 aa)) are helical bundle R4. Ser-1021 bears the Phosphoserine mark. Residues 1046–1206 (GPLEMDSALS…NRCVSCLPGQ (161 aa)) are helical bundle R5. Phosphotyrosine is present on Tyr-1116. Phosphothreonine is present on Thr-1142. Residues Ser-1201 and Ser-1225 each carry the phosphoserine modification. Residues 1207–1357 (RDVDNALRAV…QLITMCTQQA (151 aa)) are helical bundle R6. A Phosphothreonine modification is found at Thr-1263. Ser-1323 and Ser-1328 each carry phosphoserine. The segment at 1327-1948 (ASPNLKSQLA…CSPSDVYTKK (622 aa)) is interaction with SYNM. The helical bundle R7A; Interaction with KANK1 stretch occupies residues 1358–1453 (PGQKECDNAL…AYLVGVSDPN (96 aa)). An interaction with VCL and F-actin region spans residues 1359–1659 (GQKECDNALR…SMRDKAPGQL (301 aa)). The tract at residues 1461 to 1580 (LVEPTQFARA…NLSAFASNPE (120 aa)) is helical bundle R8. Position 1544 is an N6-acetyllysine (Lys-1544). Residues 1581-1653 (FSSVPAQISP…IKKLITSMRD (73 aa)) form a helical bundle R7B; Interaction with KANK1 region. Positions 1655–1822 (APGQLECETA…TLNEAASAAG (168 aa)) are helical bundle R9. The tract at residues 1823 to 1973 (VVGGMVDSIT…VLAALQAGNR (151 aa)) is helical bundle R10. Ser-1849 bears the Phosphoserine mark. Thr-1855 is subject to Phosphothreonine. Ser-1878 is modified (phosphoserine). The segment at 1974–2140 (GTQACITAAS…TVKAVEDEAT (167 aa)) is helical bundle R11. Lys-2031 is subject to N6-acetyllysine. Ser-2040 carries the post-translational modification Phosphoserine. N6-acetyllysine is present on Lys-2115. A helical bundle R12 region spans residues 2141 to 2294 (KGTRALEATT…QAAEAMKGTE (154 aa)). In terms of domain architecture, I/LWEQ spans 2293-2533 (TEWVDPEDPT…QIRQQQYKFL (241 aa)). The segment at 2300–2482 (DPTVIAENEL…AAQKAAAFED (183 aa)) is helical bundle R13.

In terms of assembly, part of a complex composed of THSD1, PTK2/FAK1, TLN1 and VCL. Interacts with THSD1; this promotes interaction with PTK2/FAK1 and VCL. Interacts with NRAP and LAYN. Interacts with SYNM. Interacts with ITGB1; the interaction is prevented by competitive binding of ITGB1BP1. Binds with high affinity to VCL and with low affinity to integrins. Interacts with APBB1IP; this inhibits VCL binding. Interacts with PTK2/FAK1. Interacts with PIP5K1C. Interacts with F-actin. Interacts with SVEP1. Interacts (via R7 domain) with KANK1 or KANK2 (via KN motif); this interaction likely initiates the assembly of cortical microtubule stabilization complexes (CMSCs) at the vicinity of focal adhesions.

Its subcellular location is the cell projection. The protein resides in the ruffle membrane. It localises to the cytoplasm. The protein localises to the cytoskeleton. It is found in the cell surface. Its subcellular location is the cell junction. The protein resides in the focal adhesion. High molecular weight cytoskeletal protein concentrated at regions of cell-matrix and cell-cell contacts. Involved in connections of major cytoskeletal structures to the plasma membrane. With KANK1 co-organize the assembly of cortical microtubule stabilizing complexes (CMSCs) positioned to control microtubule-actin crosstalk at focal adhesions (FAs) rims. This Mus musculus (Mouse) protein is Talin-1 (Tln1).